Here is a 279-residue protein sequence, read N- to C-terminus: NAD kinase (279 aa).

Catalysis depends on Asp61, which acts as the Proton acceptor. Residues 61–62 (DG), 138–139 (ND), Lys149, Lys166, Asp168, and 179–184 (TGYSFS) each bind NAD(+).

Belongs to the NAD kinase family. Requires a divalent metal cation as cofactor.

The protein localises to the cytoplasm. The catalysed reaction is NAD(+) + ATP = ADP + NADP(+) + H(+). Involved in the regulation of the intracellular balance of NAD and NADP, and is a key enzyme in the biosynthesis of NADP. Catalyzes specifically the phosphorylation on 2'-hydroxyl of the adenosine moiety of NAD to yield NADP. The protein is NAD kinase of Borrelia garinii subsp. bavariensis (strain ATCC BAA-2496 / DSM 23469 / PBi) (Borreliella bavariensis).